A 386-amino-acid chain; its full sequence is Diels-Alderase phm7 (386 aa).

The segment at 1 to 223 (MSEPTSSSSL…MVRGWSARPW (223 aa)) is beta-sandwich motif. E51, N84, and K356 together coordinate substrate. Residues 223-386 (WPTFMNDAYY…FGGQLQIPVP (164 aa)) are beta-barrel motif.

This sequence belongs to the Diels-Alderase family.

It participates in secondary metabolite biosynthesis. 3-aminomethyl-p-menthane which is similar to the phomasetin substructure, dose-dependently inhibits phm7 activity in vitro and production of phomasetin in the fungus. Functionally, diels-Alderase; part of the gene cluster that mediates the biosynthesis of the trans-fused decalin-containing tetramic acid phomasetin, the stereochemical opposite of the HIV-1 integrase inhibitor equisetin. The PKS module of phm1 together with the enoylreductase phm4 catalyze the formation of the polyketide unit which is then conjugated to L-serine by the condensation domain of the phm1 NRPS module. Activity of the Dieckmann cyclase domain (RED) of phm1 results in release of the Dieckmann product intermediate. The Diels-Alderase phm7 then uses the Dieckmann product of phm1 as substrate and catalyzes the Diels-Alder cycloaddition to form the decalin ring of N-desmethylphomasetin. N-desmethylphomasetin is further methylated to phomasetin by the methyltransferase phm5. The chain is Diels-Alderase phm7 from Pyrenochaetopsis sp.